The following is a 438-amino-acid chain: UDP-N-acetylmuramoylalanine--D-glutamate ligase (438 aa).

112 to 118 (GSNGKST) provides a ligand contact to ATP.

Belongs to the MurCDEF family.

It localises to the cytoplasm. It catalyses the reaction UDP-N-acetyl-alpha-D-muramoyl-L-alanine + D-glutamate + ATP = UDP-N-acetyl-alpha-D-muramoyl-L-alanyl-D-glutamate + ADP + phosphate + H(+). Its pathway is cell wall biogenesis; peptidoglycan biosynthesis. Cell wall formation. Catalyzes the addition of glutamate to the nucleotide precursor UDP-N-acetylmuramoyl-L-alanine (UMA). This is UDP-N-acetylmuramoylalanine--D-glutamate ligase (murD) from Escherichia coli O6:H1 (strain CFT073 / ATCC 700928 / UPEC).